We begin with the raw amino-acid sequence, 613 residues long: Putative adenosylhomocysteinase 3 (613 aa).

Composition is skewed to low complexity over residues 1 to 14 (MSVQVVSAAAAAKV) and 35 to 44 (AAAVGAMVPP). The tract at residues 1-186 (MSVQVVSAAA…KQQKNSKGSS (186 aa)) is disordered. Ser2 carries the post-translational modification N-acetylserine. The interval 2–111 (SVQVVSAAAA…DGGEALVSPD (110 aa)) is LISN domain, inhibits interaction with ITPR1. Over residues 52-68 (APAPAPAAERPPAPGPG) the composition is skewed to pro residues. Positions 70 to 80 (GPTAALSPAAG) are enriched in low complexity. Phosphoserine is present on Ser109. The span at 137–146 (RPTKIGRRSL) shows a compositional bias: basic residues. The segment covering 147–166 (SRSISQSSTDSYSSAASYTD) has biased composition (low complexity). Phosphoserine is present on residues Ser151, Ser154, Ser157, and Ser160. Thr238, Asp312, and Glu337 together coordinate substrate. 338-340 (SVT) lines the NAD(+) pocket. Positions 367 and 371 each coordinate substrate. NAD(+)-binding positions include Asn372, 403-408 (GEVGKG), Glu424, Asn459, 480-482 (MGH), and Asn527.

The protein belongs to the adenosylhomocysteinase family. Homotetramer. Forms heteromultimers with AHCYL1 (via the C-terminal region). Interacts with ITPR1; with lower affinity than AHCYL1 and maybe via ITPR1. Interacts with SLC4A4. Interacts with ZCCHC4. NAD(+) is required as a cofactor. Post-translationally, phosphorylated during neuronal differentiation at the LISN domain. As to expression, highly expressed in cerebrum, cerebellum and kidney. Also expressed in thymus, spleen, testis, ovary and, at lower, levels in lung and liver (at protein level). In cerebellum, expressed in interneurons.

The protein localises to the cytoplasm. It localises to the microsome. The catalysed reaction is S-adenosyl-L-homocysteine + H2O = L-homocysteine + adenosine. The protein operates within amino-acid biosynthesis; L-homocysteine biosynthesis; L-homocysteine from S-adenosyl-L-homocysteine: step 1/1. Functionally, may regulate the electrogenic sodium/bicarbonate cotransporter SLC4A4 activity and Mg(2+)-sensitivity. On the contrary of its homolog AHCYL1, does not regulate ITPR1 sensitivity to inositol 1,4,5-trisphosphate. The chain is Putative adenosylhomocysteinase 3 (Ahcyl2) from Mus musculus (Mouse).